We begin with the raw amino-acid sequence, 426 residues long: Glutamate-1-semialdehyde 2,1-aminomutase (426 aa).

At lysine 265 the chain carries N6-(pyridoxal phosphate)lysine.

The protein belongs to the class-III pyridoxal-phosphate-dependent aminotransferase family. HemL subfamily. Homodimer. It depends on pyridoxal 5'-phosphate as a cofactor.

It is found in the cytoplasm. The enzyme catalyses (S)-4-amino-5-oxopentanoate = 5-aminolevulinate. The protein operates within porphyrin-containing compound metabolism; protoporphyrin-IX biosynthesis; 5-aminolevulinate from L-glutamyl-tRNA(Glu): step 2/2. The sequence is that of Glutamate-1-semialdehyde 2,1-aminomutase from Marinobacter nauticus (strain ATCC 700491 / DSM 11845 / VT8) (Marinobacter aquaeolei).